A 111-amino-acid chain; its full sequence is Gene 81 protein (111 aa).

In Mycobacterium (Mycobacteriophage L5), this protein is Gene 81 protein (81).